The following is a 101-amino-acid chain: Protein RnfH (101 aa).

It belongs to the UPF0125 (RnfH) family.

This chain is Protein RnfH, found in Coxiella burnetii (strain CbuG_Q212) (Coxiella burnetii (strain Q212)).